The primary structure comprises 360 residues: Histidinol-phosphate aminotransferase (360 aa).

Lys222 carries the post-translational modification N6-(pyridoxal phosphate)lysine.

It belongs to the class-II pyridoxal-phosphate-dependent aminotransferase family. Histidinol-phosphate aminotransferase subfamily. As to quaternary structure, homodimer. Pyridoxal 5'-phosphate serves as cofactor.

The catalysed reaction is L-histidinol phosphate + 2-oxoglutarate = 3-(imidazol-4-yl)-2-oxopropyl phosphate + L-glutamate. It functions in the pathway amino-acid biosynthesis; L-histidine biosynthesis; L-histidine from 5-phospho-alpha-D-ribose 1-diphosphate: step 7/9. The chain is Histidinol-phosphate aminotransferase from Listeria monocytogenes serotype 4b (strain F2365).